Here is a 211-residue protein sequence, read N- to C-terminus: Large ribosomal subunit protein uL4 (211 aa).

Residues 50–77 (STLTKGEVSGGGKKPYKQKHTGKARQGS) form a disordered region. A compositionally biased stretch (basic residues) spans 63–72 (KPYKQKHTGK).

Belongs to the universal ribosomal protein uL4 family. As to quaternary structure, part of the 50S ribosomal subunit.

Its function is as follows. One of the primary rRNA binding proteins, this protein initially binds near the 5'-end of the 23S rRNA. It is important during the early stages of 50S assembly. It makes multiple contacts with different domains of the 23S rRNA in the assembled 50S subunit and ribosome. Functionally, forms part of the polypeptide exit tunnel. This Mycoplasma genitalium (strain ATCC 33530 / DSM 19775 / NCTC 10195 / G37) (Mycoplasmoides genitalium) protein is Large ribosomal subunit protein uL4.